The following is a 226-amino-acid chain: Clarin-3 (226 aa).

The chain crosses the membrane as a helical span at residues 8-28; the sequence is LMFLSGFLTSLGSVVVICSIL. N-linked (GlcNAc...) asparagine glycosylation occurs at N46. Transmembrane regions (helical) follow at residues 92–112, 128–148, and 181–201; these read VVILLLILSLAASVLSSVFTF, GVYTWNGLSASFVFLAMVLFV, and FWLTLHVIFLNIVTAVIIIFY.

Belongs to the clarin family.

It is found in the membrane. The sequence is that of Clarin-3 (Clrn3) from Mus musculus (Mouse).